The chain runs to 485 residues: Aspartyl/glutamyl-tRNA(Asn/Gln) amidotransferase subunit B (485 aa).

It belongs to the GatB/GatE family. GatB subfamily. As to quaternary structure, heterotrimer of A, B and C subunits.

The catalysed reaction is L-glutamyl-tRNA(Gln) + L-glutamine + ATP + H2O = L-glutaminyl-tRNA(Gln) + L-glutamate + ADP + phosphate + H(+). The enzyme catalyses L-aspartyl-tRNA(Asn) + L-glutamine + ATP + H2O = L-asparaginyl-tRNA(Asn) + L-glutamate + ADP + phosphate + 2 H(+). Its function is as follows. Allows the formation of correctly charged Asn-tRNA(Asn) or Gln-tRNA(Gln) through the transamidation of misacylated Asp-tRNA(Asn) or Glu-tRNA(Gln) in organisms which lack either or both of asparaginyl-tRNA or glutaminyl-tRNA synthetases. The reaction takes place in the presence of glutamine and ATP through an activated phospho-Asp-tRNA(Asn) or phospho-Glu-tRNA(Gln). The chain is Aspartyl/glutamyl-tRNA(Asn/Gln) amidotransferase subunit B from Borrelia turicatae (strain 91E135).